The sequence spans 262 residues: MTRKTLAIEGLTATTVIDGQQRVLVDNLSLGVQRGRILALVGASGSGKSMTCSAALGVLPPGVTASRGRVTIDGVPYAANALRGRHVATIMQNPRGAFNPVRTMRDHAIETLQALGKLSSNPQDQIVHCMRAAGLEDVKTILSLHPFEMSGGMLQRMMIALALLSEAPFLFADEPTTDLDLVVQLRVLELLEKLVEERDLGILLVTHDMGVVARLAHDVAVLDHGRLIEQAPVMDIFQTPGHEVTRMLVSAHLSLYGMELNA.

Residues 6–249 (LAIEGLTATT…PGHEVTRMLV (244 aa)) form the ABC transporter domain. 42-49 (GASGSGKS) lines the ATP pocket.

Belongs to the ABC transporter superfamily. Nickel importer (TC 3.A.1.5.3) family. As to quaternary structure, the complex is composed of two ATP-binding proteins (NikD and NikE), two transmembrane proteins (NikB and NikC) and a solute-binding protein (NikA).

The protein localises to the cell inner membrane. The catalysed reaction is Ni(2+)(out) + ATP + H2O = Ni(2+)(in) + ADP + phosphate + H(+). Functionally, part of the ABC transporter complex NikABCDE involved in nickel import. Responsible for energy coupling to the transport system. The protein is Nickel import ATP-binding protein NikD of Brucella suis biovar 1 (strain 1330).